The primary structure comprises 83 residues: Hainantoxin-III 6 (83 aa).

The N-terminal stretch at 1–21 (MKASMFLALAGLVLLFVVGYA) is a signal peptide. The propeptide occupies 22–48 (SESEEKESPRELLSKIFAVDDFKGEER). Intrachain disulfides connect cysteine 50–cysteine 65, cysteine 57–cysteine 70, and cysteine 64–cysteine 77. At leucine 81 the chain carries Leucine amide.

It belongs to the neurotoxin 10 (Hwtx-1) family. 15 (Hntx-3) subfamily. In terms of assembly, monomer. In terms of tissue distribution, expressed by the venom gland.

It is found in the secreted. Functionally, selective antagonist of neuronal tetrodotoxin (TTX)-sensitive voltage-gated sodium channels (IC(50)=1270 nM on Nav1.1/SCN1A, 270 nM on Nav1.2/SCN2A, 491 nM on Nav1.3/SCN3A and 232 nM on Nav1.7/SCN9A). This toxin suppress Nav1.7 current amplitude without significantly altering the activation, inactivation, and repriming kinetics. Short extreme depolarizations partially activate the toxin-bound channel, indicating voltage-dependent inhibition of this toxin. This toxin increases the deactivation of the Nav1.7 current after extreme depolarizations. The toxin-Nav1.7 complex is gradually dissociated upon prolonged strong depolarizations in a voltage-dependent manner, and the unbound toxin rebinds to Nav1.7 after a long repolarization. Moreover, analysis of chimeric channels showed that the DIIS3-S4 linker is critical for toxin binding to Nav1.7. These data are consistent with this toxin interacting with Nav1.7 site 4 and trapping the domain II voltage sensor in the closed state. The protein is Hainantoxin-III 6 of Cyriopagopus hainanus (Chinese bird spider).